A 126-amino-acid chain; its full sequence is Small ribosomal subunit protein bS6 (126 aa).

Belongs to the bacterial ribosomal protein bS6 family.

Binds together with bS18 to 16S ribosomal RNA. The chain is Small ribosomal subunit protein bS6 from Bordetella bronchiseptica (strain ATCC BAA-588 / NCTC 13252 / RB50) (Alcaligenes bronchisepticus).